The sequence spans 581 residues: Putative aluminum-activated malate transporter 3 (581 aa).

A run of 6 helical transmembrane segments spans residues 98–118 (MGLALTLTSILIFFKIPGLEL), 122–142 (YLWAILTVVVIFEFSIGATFS), 148–164 (GLGTLSAGGLALGMSWI), 167–187 (MTGNWADVFNAASIFVVAFFA), 201–218 (YGFRVFLLTYCYVIVSGY), and 231–251 (FLLIALGASVGLIVNTCIYPI).

The protein belongs to the aromatic acid exporter (TC 2.A.85) family.

It localises to the membrane. Functionally, malate transporter. The sequence is that of Putative aluminum-activated malate transporter 3 (ALMT3) from Arabidopsis thaliana (Mouse-ear cress).